Consider the following 60-residue polypeptide: Large ribosomal subunit protein bL32 (60 aa).

This sequence belongs to the bacterial ribosomal protein bL32 family.

This chain is Large ribosomal subunit protein bL32, found in Geobacter sulfurreducens (strain ATCC 51573 / DSM 12127 / PCA).